We begin with the raw amino-acid sequence, 165 residues long: Large ribosomal subunit protein uL10 (165 aa).

This sequence belongs to the universal ribosomal protein uL10 family. As to quaternary structure, part of the ribosomal stalk of the 50S ribosomal subunit. The N-terminus interacts with L11 and the large rRNA to form the base of the stalk. The C-terminus forms an elongated spine to which L12 dimers bind in a sequential fashion forming a multimeric L10(L12)X complex.

In terms of biological role, forms part of the ribosomal stalk, playing a central role in the interaction of the ribosome with GTP-bound translation factors. This chain is Large ribosomal subunit protein uL10, found in Mycoplasma mycoides subsp. mycoides SC (strain CCUG 32753 / NCTC 10114 / PG1).